Reading from the N-terminus, the 505-residue chain is Flagellin (505 aa).

Belongs to the bacterial flagellin family.

It is found in the secreted. The protein localises to the bacterial flagellum. Flagellin is the subunit protein which polymerizes to form the filaments of bacterial flagella. The polypeptide is Flagellin (fliC) (Salmonella senftenberg).